The sequence spans 292 residues: Malectin (292 aa).

A signal peptide spans 1 to 28 (MLGAWAVEGTAVALLRLLLLLLPPAIRG). The Lumenal portion of the chain corresponds to 29-269 (PGLGVAGVAG…TPNPYASDNS (241 aa)). Residues tyrosine 82, tyrosine 104, tyrosine 131, phenylalanine 132, and aspartate 201 each contribute to the a carbohydrate site. The disordered stretch occupies residues 221–265 (LQPHPGLEKKEEEEEEEEYDEGSNLKKQTNKNRVQSGPRTPNPYA). Over residues 231–241 (EEEEEEEEYDE) the composition is skewed to acidic residues. Positions 245–265 (LKKQTNKNRVQSGPRTPNPYA) are enriched in polar residues. Asparagine 268 carries an N-linked (GlcNAc...) asparagine glycan. The helical transmembrane segment at 270-290 (SLMFPILVAFGVFIPTLFCLC) threads the bilayer. Over 291–292 (RL) the chain is Cytoplasmic.

Belongs to the malectin family. In terms of assembly, interacts with the oligosaccharyltransferase (OST) complex.

The protein localises to the endoplasmic reticulum membrane. Functionally, carbohydrate-binding protein with a strong ligand preference for Glc2-N-glycan. May play a role in the early steps of protein N-glycosylation. The sequence is that of Malectin from Homo sapiens (Human).